We begin with the raw amino-acid sequence, 77 residues long: Liver-expressed antimicrobial peptide 2 (77 aa).

The signal sequence occupies residues 1–22 (MWHLKLCAVLMIFLLLLGQIDG). The propeptide occupies 23–37 (SPIPEVSSAKRRPRR). 2 disulfide bridges follow: Cys-54–Cys-65 and Cys-60–Cys-70.

The protein belongs to the LEAP2 family.

The protein localises to the secreted. In terms of biological role, has an antimicrobial activity. This is Liver-expressed antimicrobial peptide 2 (LEAP2) from Homo sapiens (Human).